A 166-amino-acid polypeptide reads, in one-letter code: 2-amino-4-hydroxy-6-hydroxymethyldihydropteridine pyrophosphokinase (166 aa).

Belongs to the HPPK family.

It catalyses the reaction 6-hydroxymethyl-7,8-dihydropterin + ATP = (7,8-dihydropterin-6-yl)methyl diphosphate + AMP + H(+). It participates in cofactor biosynthesis; tetrahydrofolate biosynthesis; 2-amino-4-hydroxy-6-hydroxymethyl-7,8-dihydropteridine diphosphate from 7,8-dihydroneopterin triphosphate: step 4/4. In terms of biological role, catalyzes the transfer of pyrophosphate from adenosine triphosphate (ATP) to 6-hydroxymethyl-7,8-dihydropterin, an enzymatic step in folate biosynthesis pathway. This is 2-amino-4-hydroxy-6-hydroxymethyldihydropteridine pyrophosphokinase (folK) from Streptococcus pyogenes serotype M1.